Consider the following 253-residue polypeptide: tRNA pseudouridine synthase A (253 aa).

Catalysis depends on Asp-53, which acts as the Nucleophile. Tyr-112 is a binding site for substrate.

Belongs to the tRNA pseudouridine synthase TruA family. In terms of assembly, homodimer.

It catalyses the reaction uridine(38/39/40) in tRNA = pseudouridine(38/39/40) in tRNA. Functionally, formation of pseudouridine at positions 38, 39 and 40 in the anticodon stem and loop of transfer RNAs. The sequence is that of tRNA pseudouridine synthase A from Lactococcus lactis subsp. cremoris (strain SK11).